The following is a 20-amino-acid chain: Pregnancy-associated glycoprotein 60H (20 aa).

An N-linked (GlcNAc...) asparagine glycan is attached at asparagine 4.

This sequence belongs to the peptidase A1 family. As to expression, chorionic epithelium (trophectoderm) and placental cotyledons.

The protein resides in the secreted. The protein localises to the extracellular space. The sequence is that of Pregnancy-associated glycoprotein 60H from Bison bonasus (European bison).